We begin with the raw amino-acid sequence, 68 residues long: Phosphatidylinositol N-acetylglucosaminyltransferase ERI1 subunit (68 aa).

2 helical membrane passes run 8-28 (FLVL…FYWL) and 34-54 (FLHY…WALI).

Component of the phosphatidylinositol N-acetylglucosaminyltransferase (GPI-GlcNAc transferase) complex composed of at least GPI1, GPI2, GPI3, GPI15, GPI19 and ERI1. Interacts with GPI2. Interacts with GTP-bound RAS2 in an effector loop-dependent manner.

Its subcellular location is the endoplasmic reticulum membrane. It participates in glycolipid biosynthesis; glycosylphosphatidylinositol-anchor biosynthesis. Probable component of the GPI-GlcNAc transferase (GPI-GnT) complex in the endoplasmic reticulum, a complex that catalyzes transfer of GlcNAc from UDP-GlcNAc to an acceptor phosphatidylinositol, the first step in the production of GPI-anchors for cell surface proteins. Ras may inhibit the enzyme activity of the GPI-GnT complex via the association between ERI1 and RAS2. The chain is Phosphatidylinositol N-acetylglucosaminyltransferase ERI1 subunit (ERI1) from Saccharomyces cerevisiae (strain ATCC 204508 / S288c) (Baker's yeast).